The primary structure comprises 744 residues: Junctophilin-3 (744 aa).

Over 1-723 (MSSGGRFNFD…LKSSTGSAPI (723 aa)) the chain is Cytoplasmic. MORN repeat units lie at residues 15-37 (YCGG…KGQG), 39-60 (YTGS…SGNT), 61-82 (YQGT…GKWV), 83-105 (YKGE…GNGA), 107-129 (YEGT…DGGT), and 130-152 (YQGQ…PYGM). A disordered region spans residues 230 to 252 (SKSSLASQRSKQSSFRSEAGMST). Low complexity predominate over residues 231–244 (KSSLASQRSKQSSF). MORN repeat units follow at residues 288–310 (YVGE…DGLK) and 311–333 (YEGE…DGTK). Ser-440 is subject to Phosphoserine. Thr-451 carries the post-translational modification Phosphothreonine. Disordered regions lie at residues 451–603 (TPLQ…LLEP) and 624–677 (CPQD…ESLR). A Phosphoserine modification is found at Ser-457. Thr-471 carries the post-translational modification Phosphothreonine. 2 positions are modified to phosphoserine: Ser-475 and Ser-506. Residues Ser-699 and Ser-706 each carry the phosphoserine modification. The chain crosses the membrane as a helical; Anchor for type IV membrane protein span at residues 724-744 (LVVMVILLNIGVAILFINFFI).

The protein belongs to the junctophilin family. In terms of tissue distribution, specifically expressed in brain. Highest levels in the olfactory tubercle, caudate putamen, nucleus accumbens, hippocampal formation, piriform cortex and cerebellar cortex. Expressed in disctete neurons sites. In hippocampal formation, expressed in dendrites of hippocampal pyramidal and denate granule cells. In cerebellum, it is highly expressed in Purkinge cells, while it is weakly expressed in granular cells.

The protein resides in the cell membrane. Its subcellular location is the endoplasmic reticulum membrane. Functionally, junctophilins contribute to the formation of junctional membrane complexes (JMCs) which link the plasma membrane with the endoplasmic or sarcoplasmic reticulum in excitable cells. Provides a structural foundation for functional cross-talk between the cell surface and intracellular calcium release channels. JPH3 is brain-specific and appears to have an active role in certain neurons involved in motor coordination and memory. This chain is Junctophilin-3 (Jph3), found in Mus musculus (Mouse).